The primary structure comprises 254 residues: MAFLIHSPLEQFEVTSLISLNLPVLGYINLSLTNLGLYTILTVYLVLALHIMGSNNKQLIPSRWSIALESSFASVHGLVKSQIGAANEMYLPFIYSLFFFILIANLSGNVPYGFTVATSIMVSIGLSMTIFIGVTILGLRLHKVHFFSFFVPSGTPLGLVPLLVPIELISYLARAFSLGVRLFANVTAGHVLMKILAGFLAPLFTSTFIISVLTVLPFIIFTGIIGLEIAVSFIQAYVFCVLTCSYLKDAIDLH.

Positions 1 to 6 (MAFLIH) are cleaved as a propeptide — removed in mature form. Transmembrane regions (helical) follow at residues 32–52 (LTNLGLYTILTVYLVLALHIM), 83–103 (IGAANEMYLPFIYSLFFFILI), 119–139 (SIMVSIGLSMTIFIGVTILGL), 146–166 (FFSFFVPSGTPLGLVPLLVPI), 182–202 (LFANVTAGHVLMKILAGFLAP), 207–227 (TFIISVLTVLPFIIFTGIIGL), and 228–248 (EIAVSFIQAYVFCVLTCSYLK).

The protein belongs to the ATPase A chain family. F-type ATPases have 2 components, CF(1) - the catalytic core - and CF(0) - the membrane proton channel. CF(1) has five subunits: alpha(3), beta(3), gamma(1), delta(1), epsilon(1). CF(0) has three main subunits: a, b and c.

The protein resides in the mitochondrion inner membrane. Functionally, mitochondrial membrane ATP synthase (F(1)F(0) ATP synthase or Complex V) produces ATP from ADP in the presence of a proton gradient across the membrane which is generated by electron transport complexes of the respiratory chain. F-type ATPases consist of two structural domains, F(1) - containing the extramembraneous catalytic core and F(0) - containing the membrane proton channel, linked together by a central stalk and a peripheral stalk. During catalysis, ATP synthesis in the catalytic domain of F(1) is coupled via a rotary mechanism of the central stalk subunits to proton translocation. Key component of the proton channel; it may play a direct role in the translocation of protons across the membrane. The chain is ATP synthase subunit a (ATP6) from Mycosarcoma maydis (Corn smut fungus).